Consider the following 45-residue polypeptide: Myotoxin-3 (45 aa).

Disulfide bonds link cysteine 4–cysteine 36, cysteine 11–cysteine 30, and cysteine 18–cysteine 37.

As to quaternary structure, monomer. In terms of tissue distribution, expressed by the venom gland.

The protein localises to the secreted. In terms of biological role, cationic peptide that possesses multiple functions. It acts as a cell-penetrating peptide (CPP), and as a potent voltage-gated potassium channel (Kv) inhibitor. It exhibits antimicrobial activities, hind limb paralysis, and severe muscle necrosis by a non-enzymatic mechanism. The polypeptide is Myotoxin-3 (Crotalus viridis viridis (Prairie rattlesnake)).